The following is a 294-amino-acid chain: Protease HtpX homolog 2 (294 aa).

The next 2 helical transmembrane spans lie at 15–35 (MLFTMFLLAAVYLFFLAFLSY) and 36–56 (YGTSQIFIILFIGLFMAAQYF). His-140 is a binding site for Zn(2+). Glu-141 is an active-site residue. His-144 lines the Zn(2+) pocket. The next 2 membrane-spanning stretches (helical) occupy residues 151-171 (AVLTIASFLSSVAFYIVRYSL) and 185-205 (GGIMLVWLVSIVVWIVSFLLI). A Zn(2+)-binding site is contributed by Glu-213.

The protein belongs to the peptidase M48B family. Zn(2+) serves as cofactor.

The protein localises to the cell membrane. The sequence is that of Protease HtpX homolog 2 from Methanosarcina mazei (strain ATCC BAA-159 / DSM 3647 / Goe1 / Go1 / JCM 11833 / OCM 88) (Methanosarcina frisia).